Reading from the N-terminus, the 525-residue chain is MSNIHEHKILILDFGSQYTQLIARRIREIGVYCELWAWDVSEEQIREFAPNGIILAGGPESVTAENSPRAPEYVFNAGVPVLGICYGMQTMSEQLGGKVIQGVGEGEFGYAQVEVQTESALFKAIEDAVSETGKPLLDVWMSHGDKVSAIPEGFVAVAKTETCPFAAMANEDKQFYGVQFHPEVTHTRQGKRMLEHFALEICGCPANWKPSSIIEDAIERLKEQIGDDEVILGLSGGVDSSVVAMLLHRAIGDKLTCVFVDNGLLRLNEAQQVMDMFGDHFGLNIVHVDAENRFLDAMAGEAEPEAKRKIIGRVFVEIFDEESKKCVNAKWLAQGTIYPDVIESAGSATGKAHCIKSHHNVGGLPDDMAMGLVEPLRELFKDEVRKIGLELGLPYDMLYRHPFPGPGLGVRVLGEVKKEYCDLLRLADAIFIEELHKADLYNKVSQAFTVFLPVRSVGVMGDGRKYDWVVSLRAVETIDFMTAHWAHLPYDFLGRVSNRIINEVDGISRVVYDISGKPPATIEWE.

The Glutamine amidotransferase type-1 domain maps to 8–207 (KILILDFGSQ…ALEICGCPAN (200 aa)). Cysteine 85 functions as the Nucleophile in the catalytic mechanism. Residues histidine 181 and glutamate 183 contribute to the active site. The 193-residue stretch at 208-400 (WKPSSIIEDA…LGLPYDMLYR (193 aa)) folds into the GMPS ATP-PPase domain. 235-241 (SGGVDSS) contributes to the ATP binding site.

Homodimer.

It carries out the reaction XMP + L-glutamine + ATP + H2O = GMP + L-glutamate + AMP + diphosphate + 2 H(+). The protein operates within purine metabolism; GMP biosynthesis; GMP from XMP (L-Gln route): step 1/1. In terms of biological role, catalyzes the synthesis of GMP from XMP. The chain is GMP synthase [glutamine-hydrolyzing] from Shewanella pealeana (strain ATCC 700345 / ANG-SQ1).